Reading from the N-terminus, the 146-residue chain is MKLHELKPAQGSRKTRNRVGRGSSSGNGKTAGRGQKGQKARSGGNIRSGFEGGQTPLFRRLPKRGFTNINAKEYALVNLDQLNVFEDGAEVTPVVLVETGIVKAEKSGIKILGNGELTKKLTVKAAKFSKSAEAAIIAKGGSIEVI.

The tract at residues 1 to 57 is disordered; that stretch reads MKLHELKPAQGSRKTRNRVGRGSSSGNGKTAGRGQKGQKARSGGNIRSGFEGGQTPL. Over residues 23–35 the composition is skewed to gly residues; that stretch reads SSSGNGKTAGRGQ.

It belongs to the universal ribosomal protein uL15 family. In terms of assembly, part of the 50S ribosomal subunit.

Binds to the 23S rRNA. The polypeptide is Large ribosomal subunit protein uL15 (Streptococcus mutans serotype c (strain ATCC 700610 / UA159)).